Reading from the N-terminus, the 111-residue chain is Large ribosomal subunit protein bL20c (111 aa).

The protein belongs to the bacterial ribosomal protein bL20 family.

It is found in the plastid. Its subcellular location is the chloroplast. In terms of biological role, binds directly to 23S ribosomal RNA and is necessary for the in vitro assembly process of the 50S ribosomal subunit. It is not involved in the protein synthesizing functions of that subunit. This chain is Large ribosomal subunit protein bL20c, found in Ostreococcus tauri.